Reading from the N-terminus, the 114-residue chain is Large ribosomal subunit protein bL20c (114 aa).

It belongs to the bacterial ribosomal protein bL20 family.

It localises to the plastid. The protein resides in the chloroplast. In terms of biological role, binds directly to 23S ribosomal RNA and is necessary for the in vitro assembly process of the 50S ribosomal subunit. It is not involved in the protein synthesizing functions of that subunit. This is Large ribosomal subunit protein bL20c from Tetradesmus obliquus (Green alga).